The chain runs to 413 residues: Divalent metal cation transporter MntH (413 aa).

Helical transmembrane passes span 19 to 39, 46 to 66, 94 to 114, 122 to 142, 156 to 176, 196 to 216, 241 to 261, 290 to 310, 329 to 349, 350 to 370, and 392 to 412; these read LALM…GNFA, ASFG…AMLI, VWFY…AEFI, LVLG…TFLI, VIGG…IFSQ, AVFL…IYLH, IAMT…AAAF, IFGL…TLAG, AVTM…TRIL, VMSQ…LLIF, and VIVA…LLGV.

This sequence belongs to the NRAMP family.

The protein resides in the cell inner membrane. In terms of biological role, h(+)-stimulated, divalent metal cation uptake system. This is Divalent metal cation transporter MntH from Klebsiella pneumoniae (strain 342).